The sequence spans 918 residues: Protein SEY1 homolog (918 aa).

The Cytoplasmic segment spans residues 1–701 (MESSNHLPNK…AGTSVSSWRN (701 aa)). Residues 46–280 (GFKFNVVTIL…VPSDGFFVYS (235 aa)) enclose the GB1/RHD3-type G domain. Residue 56 to 63 (GSQSSGKS) participates in GTP binding. Residues 554-626 (SLVLLLKATQ…DALTLLQVLK (73 aa)) adopt a coiled-coil conformation. The helical transmembrane segment at 702 to 722 (IPPVFWLVLLVLGWNELRAAF) threads the bilayer. The Lumenal portion of the chain corresponds to 723–725 (RVL). A helical transmembrane segment spans residues 726–746 (LKFYILIPLLIVSYFTFSYSA). The Cytoplasmic segment spans residues 747–918 (NKLLGPKANE…CGKAVHLAQW (172 aa)).

It belongs to the TRAFAC class dynamin-like GTPase superfamily. GB1/RHD3 GTPase family. RHD3 subfamily.

The protein localises to the endoplasmic reticulum membrane. Probable GTP-binding protein that may be involved in cell development. The chain is Protein SEY1 homolog from Theileria annulata.